We begin with the raw amino-acid sequence, 190 residues long: MPPRPRFDRRAPVRELPNINERIKYPQLRVVDSDGKQLGVIDRLKALEIASQRELDLVLVSEKANPPVCRIMDYGKYKFEQEKKAKEARKKSHQTEVKEVKMRYKIDKHDYDVRIGQATKFLKSGDKVKCTVIFRGREIQHSNLAETLLLRMANDLEEQSEVQQKPKREGRNMIMFLSPRKTPLIKKDDA.

This sequence belongs to the IF-3 family. In terms of assembly, monomer.

It is found in the cytoplasm. In terms of biological role, IF-3 binds to the 30S ribosomal subunit and shifts the equilibrium between 70S ribosomes and their 50S and 30S subunits in favor of the free subunits, thus enhancing the availability of 30S subunits on which protein synthesis initiation begins. The chain is Translation initiation factor IF-3 from Prochlorococcus marinus (strain MIT 9301).